A 60-amino-acid chain; its full sequence is Cytotoxin 2 (60 aa).

4 cysteine pairs are disulfide-bonded: Cys-3/Cys-21, Cys-14/Cys-38, Cys-42/Cys-53, and Cys-54/Cys-59.

This sequence belongs to the three-finger toxin family. Short-chain subfamily. Type IA cytotoxin sub-subfamily. Monomer, or heterodimer with alpha-cobratoxin (AC P01391); disulfide-linked. Expressed by the venom gland.

The protein localises to the secreted. Its subcellular location is the target cell membrane. Its function is as follows. Monomer: shows cytolytic activity. Functionally, heterodimer: has no cytolytic activity, but retains most of the alpha-cobratoxin capacity to compete with alpha-bungarotoxin for binding to Torpedo and alpha-7/CHRNA7 nicotinic acetylcholine receptors (nAChRs) as well as to Lymnea stagnalis acetylcholine-binding protein. This is Cytotoxin 2 from Naja kaouthia (Monocled cobra).